The following is a 356-amino-acid chain: tRNA N6-adenosine threonylcarbamoyltransferase (356 aa).

Positions 115 and 119 each coordinate Fe cation. Substrate-binding positions include 138–142, Asp-171, Gly-184, and Asn-283; that span reads LVSGG. Residue Asp-311 participates in Fe cation binding.

It belongs to the KAE1 / TsaD family. Fe(2+) serves as cofactor.

It is found in the cytoplasm. It carries out the reaction L-threonylcarbamoyladenylate + adenosine(37) in tRNA = N(6)-L-threonylcarbamoyladenosine(37) in tRNA + AMP + H(+). Functionally, required for the formation of a threonylcarbamoyl group on adenosine at position 37 (t(6)A37) in tRNAs that read codons beginning with adenine. Is involved in the transfer of the threonylcarbamoyl moiety of threonylcarbamoyl-AMP (TC-AMP) to the N6 group of A37, together with TsaE and TsaB. TsaD likely plays a direct catalytic role in this reaction. The chain is tRNA N6-adenosine threonylcarbamoyltransferase from Prochlorococcus marinus subsp. pastoris (strain CCMP1986 / NIES-2087 / MED4).